Consider the following 381-residue polypeptide: Glycerophosphocholine acyltransferase 1 (381 aa).

Over 1–63 the chain is Cytoplasmic; sequence MANNEDSNSN…IAKQAEEHER (63 aa). A helical membrane pass occupies residues 64–84; it reads FINKVTHLVGVLGFGGFCFLL. Topologically, residues 85 to 89 are lumenal; sequence GARPQ. The chain crosses the membrane as a helical span at residues 90-110; it reads DIPLVYCFFYVIFVPLRWIYY. Topologically, residues 111–116 are cytoplasmic; sequence RFKKWH. The chain crosses the membrane as a helical span at residues 117–137; it reads YYLLDFCYYANTIFLVDLLLY. Residues 138–141 are Lumenal-facing; it reads PKNE. Residues 142-162 traverse the membrane as a helical segment; that stretch reads KLFMVCFSFAEGPLAWAIIVW. The Cytoplasmic portion of the chain corresponds to 163 to 173; it reads RCSLVFSSPDK. A helical membrane pass occupies residues 174–194; the sequence is IVSVLIHLLPGLVFFTIRWWN. Over 195–223 the chain is Lumenal; it reads PATFAAMHPVGTDRRVSWPYVEDKAYLFT. Residues 224–244 traverse the membrane as a helical segment; sequence WLFLVPLVVYTLWQVLYFLIV. The Cytoplasmic portion of the chain corresponds to 245 to 291; the sequence is NVLRRQRLLRDPEVMTSYRELSKKAEKANNKLWQLSGLLGDQNRIWM. Residues 292–312 form a helical membrane-spanning segment; the sequence is YILFQAIFTVATMALTVPIFL. Residues 313-315 are Lumenal-facing; that stretch reads SYR. The chain crosses the membrane as a helical span at residues 316 to 336; sequence LHVIFQILKISAAVWNGGSFL. Topologically, residues 337 to 381 are cytoplasmic; it reads LEVMPRQVIQKEKKKKAEMQPIEEQILHHEAVSHPTENEPKSTET.

The protein belongs to the GPC1 family.

The protein resides in the membrane. It catalyses the reaction sn-glycerol 3-phosphocholine + an acyl-CoA = a 1-acyl-sn-glycero-3-phosphocholine + CoA. The enzyme catalyses sn-glycero-3-phosphoethanolamine + an acyl-CoA = a monoacyl-sn-glycero-3-phosphoethanolamine + CoA. The catalysed reaction is sn-glycerol 3-phosphocholine + (9Z)-octadecenoyl-CoA = (9Z-octadecenoyl)-sn-glycero-3-phosphocholine + CoA. Glycerophosphocholine acyltransferase (GPCAT) that utilizes acyl-CoA to acylate glycero-3-phosphocholine (GPC), forming lysophosphatidylcholine (LPC). Shows broad acyl specificities with a preference for 16:0-CoA, polyunsaturated acyl-CoA, and the hydroxylated ricinoleoyl-CoA. Also catalyzes the acylation of glycero-3-phosphoethanolamine (GPE) with acyl-CoA. In addition to acyl-CoA, GPCAT efficiently utilizes LPC and lysophosphatidylethanolamine (LPE) as acyl donors in the acylation of GPC. Contributes to the maintenance of phosphatidylcholine (PC) homeostasis and might also have specific functions in acyl editing of PC, such as transferring acyl groups modified at the sn-2 position of PC to the sn-1. This is Glycerophosphocholine acyltransferase 1 from Arabidopsis thaliana (Mouse-ear cress).